A 491-amino-acid chain; its full sequence is uncharacterized protein (491 aa).

267-274 serves as a coordination point for ATP; it reads GIQGTGKS.

Belongs to the AAA ATPase family. Highly divergent.

It localises to the plastid. The protein localises to the chloroplast. This is an uncharacterized protein from Gracilaria tenuistipitata var. liui (Red alga).